Here is a 351-residue protein sequence, read N- to C-terminus: Probable RNA methyltransferase BAV1540 (351 aa).

Glu-90 (proton acceptor) is an active-site residue. A Radical SAM core domain is found at 93–319; sequence LLPRDGLCVS…VKVRNSAGQD (227 aa). A disulfide bridge connects residues Cys-100 and Cys-324. [4Fe-4S] cluster is bound by residues Cys-107, Cys-111, and Cys-114. S-adenosyl-L-methionine is bound by residues 152-153, Ser-182, 205-207, and Asn-281; these read GE and SLH. Catalysis depends on Cys-324, which acts as the S-methylcysteine intermediate.

The protein belongs to the radical SAM superfamily. RlmN family. [4Fe-4S] cluster serves as cofactor.

The protein localises to the cytoplasm. The sequence is that of Probable RNA methyltransferase BAV1540 from Bordetella avium (strain 197N).